The sequence spans 82 residues: Small ribosomal subunit protein bS16 (82 aa).

Belongs to the bacterial ribosomal protein bS16 family.

This is Small ribosomal subunit protein bS16 from Alcanivorax borkumensis (strain ATCC 700651 / DSM 11573 / NCIMB 13689 / SK2).